Reading from the N-terminus, the 273-residue chain is F-actin-capping protein subunit alpha (273 aa).

It belongs to the F-actin-capping protein alpha subunit family. As to quaternary structure, component of the F-actin capping complex, composed of a heterodimer of an alpha and a beta subunit.

The protein resides in the cytoplasm. Its subcellular location is the cytoskeleton. The protein localises to the actin patch. Its function is as follows. F-actin-capping proteins bind in a Ca(2+)-independent manner to the fast growing ends of actin filaments (barbed end) thereby blocking the exchange of subunits at these ends. Unlike other capping proteins (such as gelsolin and severin), these proteins do not sever actin filaments. This chain is F-actin-capping protein subunit alpha (fac-1), found in Neurospora crassa (strain ATCC 24698 / 74-OR23-1A / CBS 708.71 / DSM 1257 / FGSC 987).